The following is a 470-amino-acid chain: Uronate isomerase (470 aa).

It belongs to the metallo-dependent hydrolases superfamily. Uronate isomerase family.

It catalyses the reaction D-glucuronate = D-fructuronate. The enzyme catalyses aldehydo-D-galacturonate = keto-D-tagaturonate. It participates in carbohydrate metabolism; pentose and glucuronate interconversion. The protein is Uronate isomerase of Cutibacterium acnes (strain DSM 16379 / KPA171202) (Propionibacterium acnes).